The chain runs to 620 residues: Glutathione-regulated potassium-efflux system protein KefC (620 aa).

Helical transmembrane passes span H4–V24, L26–L46, S54–L74, G90–L110, V114–M134, F149–L169, L178–L198, V218–G238, G270–V290, L294–V314, W327–Q347, and A359–T379. Residues Q399 to T518 form the RCK N-terminal domain. The segment at Q599–I620 is disordered.

This sequence belongs to the monovalent cation:proton antiporter 2 (CPA2) transporter (TC 2.A.37) family. KefC subfamily. As to quaternary structure, homodimer. Interacts with the regulatory subunit KefF.

The protein resides in the cell inner membrane. Pore-forming subunit of a potassium efflux system that confers protection against electrophiles. Catalyzes K(+)/H(+) antiport. The sequence is that of Glutathione-regulated potassium-efflux system protein KefC from Salmonella schwarzengrund (strain CVM19633).